Here is a 486-residue protein sequence, read N- to C-terminus: Cysteine--tRNA ligase (486 aa).

Zn(2+) is bound at residue Cys-29. Positions 31 to 41 (ITVYDYCHLGH) match the 'HIGH' region motif. Positions 215, 240, and 244 each coordinate Zn(2+). Positions 272 to 276 (KMSKS) match the 'KMSKS' region motif. Residue Lys-275 participates in ATP binding.

The protein belongs to the class-I aminoacyl-tRNA synthetase family. Monomer. Requires Zn(2+) as cofactor.

It is found in the cytoplasm. It carries out the reaction tRNA(Cys) + L-cysteine + ATP = L-cysteinyl-tRNA(Cys) + AMP + diphosphate. This Gloeothece citriformis (strain PCC 7424) (Cyanothece sp. (strain PCC 7424)) protein is Cysteine--tRNA ligase.